Here is a 157-residue protein sequence, read N- to C-terminus: Transcriptional repressor NrdR (157 aa).

The interval Met-1–Asp-21 is disordered. A zinc finger spans residues Cys-3 to Cys-34. Basic and acidic residues predominate over residues Ser-11 to Asp-21. The 91-residue stretch at Leu-49–Asp-139 folds into the ATP-cone domain.

This sequence belongs to the NrdR family. Requires Zn(2+) as cofactor.

Its function is as follows. Negatively regulates transcription of bacterial ribonucleotide reductase nrd genes and operons by binding to NrdR-boxes. The sequence is that of Transcriptional repressor NrdR from Sinorhizobium fredii (strain NBRC 101917 / NGR234).